The primary structure comprises 241 residues: Sugar fermentation stimulation protein homolog (241 aa).

It belongs to the SfsA family.

This chain is Sugar fermentation stimulation protein homolog, found in Hahella chejuensis (strain KCTC 2396).